The following is a 652-amino-acid chain: MKLLWQVTVHHTWNAVLLPVVYLTAQVWILCAAIAAAASAGPQNCPSVCSCSNQFSKVVCTRRGLSEVPQGIPSNTRYLNLMENNIQMIQADTFRHLHHLEVLQLGRNAIRQIEVGAFNGLASLNTLELFDNWLTVIPSGAFEYLSKLRELWLRNNPIESIPSYAFNRVPSLMRLDLGELKKLEYISEGAFEGLFNLKYLNLGMCNIKDMPNLTPLVGLEELEMSGNHFPEIRPGSFHGLSSLKKLWVMNSQVSLIERNAFDGLASLVELNLAHNNLSSLPHDLFTPLRYLVELHLHHNPWNCDCDILWLAWWLREYIPTNSTCCGRCHAPMHMRGRYLVEVDQASFQCSAPFIMDAPRDLNISEDRMAELKCRTPPMSSVKWLLPNGTVLSHASRHPRISVLNDGTLNFSRVLLIDTGVYTCMVTNVAGNSNASAYLNVSSAELNTPNFSFFTTVTVETTEISPEDITRKYKPVPTTSTGYQPAYTTSTTVLIQTTRVPKQVPVPSTDTTDKMQTSLDEVMKTTKIIIGCFVAVTLLAAAMLIVFYKLRKRHQQRSTVTAARTVEIIQVDEDIPAAASAAATAAPSGVSGEGAVVLPTIHDHINYNTYKPAHGAHWTENSLGNSLHPTVTTISEPYIIQTHTKDKVQETQI.

A signal peptide spans 1–40; sequence MKLLWQVTVHHTWNAVLLPVVYLTAQVWILCAAIAAAASA. The Extracellular segment spans residues 1–526; the sequence is MKLLWQVTVH…SLDEVMKTTK (526 aa). One can recognise an LRRNT domain in the interval 41–74; that stretch reads GPQNCPSVCSCSNQFSKVVCTRRGLSEVPQGIPS. 2 disulfide bridges follow: Cys-45/Cys-51 and Cys-49/Cys-60. LRR repeat units follow at residues 75-96, 99-120, 123-144, 147-168, 171-193, 196-217, 218-239, 242-263, and 266-287; these read NTRYLNLMENNIQMIQADTFRH, HLEVLQLGRNAIRQIEVGAFNG, SLNTLELFDNWLTVIPSGAFEY, KLRELWLRNNPIESIPSYAFNR, SLMRLDLGELKKLEYISEGAFEG, NLKYLNLGMCNIKDMPNLTPLV, GLEELEMSGNHFPEIRPGSFHG, SLKKLWVMNSQVSLIERNAFDG, and SLVELNLAHNNLSSLPHDLFTP. The region spanning 299 to 351 is the LRRCT domain; that stretch reads NPWNCDCDILWLAWWLREYIPTNSTCCGRCHAPMHMRGRYLVEVDQASFQCSA. Cystine bridges form between Cys-303–Cys-328 and Cys-305–Cys-349. Asn-321 and Asn-362 each carry an N-linked (GlcNAc...) asparagine glycan. The Ig-like C2-type domain maps to 352–441; it reads PFIMDAPRDL…SNASAYLNVS (90 aa). A disulfide bridge connects residues Cys-373 and Cys-423. The chain crosses the membrane as a helical span at residues 527–547; it reads IIIGCFVAVTLLAAAMLIVFY. The Cytoplasmic segment spans residues 548–652; the sequence is KLRKRHQQRS…TKDKVQETQI (105 aa).

In terms of assembly, interacts (via LRR repeats) with NTNG2. Interacts with DLG4. Found in a complex with NMDA receptors. In terms of processing, N-glycosylated. In terms of tissue distribution, mainly expressed in the brain. Expression is concentrated in the olfactory bulb, cortex, hippocampus and cerebellum in adult brain. Detected both embryonically and postnatally with stronger expression in postnatal stages.

Its subcellular location is the membrane. It localises to the postsynaptic cell membrane. Its function is as follows. Synaptic adhesion protein. Regulates the formation of exitatory synapses through the recruitment of pre-and-postsynaptic proteins. Organize the lamina/pathway-specific differentiation of dendrites. Plays an important role for auditory synaptic responses. Involved in the suppression of glioma. This Rattus norvegicus (Rat) protein is Leucine-rich repeat-containing protein 4 (Lrrc4).